A 321-amino-acid polypeptide reads, in one-letter code: Basic endochitinase A (321 aa).

Residues 1 to 19 form the signal peptide; that stretch reads MGAFALFAVLAMAVTMAVA. The Chitin-binding type-1 domain occupies 20–60; sequence EQCGSQAGGATCPNCLCCSRFGWCGSTSDYCGDGCQSQCAG. Disulfide bonds link Cys-22–Cys-37, Cys-31–Cys-43, Cys-34–Cys-61, Cys-36–Cys-50, and Cys-54–Cys-58. A hinge region (Gly/Pro/Thr-rich) region spans residues 62–79; that stretch reads GGGGTPVTPTPTPSGGGG. Residues 80–321 are catalytic; sequence VSSIVSRALF…LDCYNQRPFA (242 aa). Cystine bridges form between Cys-101–Cys-163, Cys-175–Cys-183, and Cys-301–Cys-314. Glu-145 (proton donor) is an active-site residue.

Belongs to the glycosyl hydrolase 19 family. Chitinase class I subfamily. As to expression, localized in the aleurone cells of the seed endosperm (at protein level).

The enzyme catalyses Random endo-hydrolysis of N-acetyl-beta-D-glucosaminide (1-&gt;4)-beta-linkages in chitin and chitodextrins.. Defense against chitin-containing fungal pathogens. Binds the hyphal tips, lateral walls and septa of fungi and degrades mature chitin. The polypeptide is Basic endochitinase A (Secale cereale (Rye)).